Consider the following 204-residue polypeptide: Large ribosomal subunit protein eL15y (204 aa).

Residues 162–204 (RGLTSEGKKNRGLRGKGHNNHKNRPSRRATWKKNNSISLRRYR) form a disordered region. Over residues 171 to 192 (NRGLRGKGHNNHKNRPSRRATW) the composition is skewed to basic residues. Residues 193 to 204 (KKNNSISLRRYR) show a composition bias toward polar residues.

This sequence belongs to the eukaryotic ribosomal protein eL15 family.

This is Large ribosomal subunit protein eL15y (RPL15B) from Arabidopsis thaliana (Mouse-ear cress).